Reading from the N-terminus, the 305-residue chain is Taste receptor type 2 member 136 (305 aa).

The Extracellular portion of the chain corresponds to Met-1–Ala-9. The chain crosses the membrane as a helical span at residues Ser-10–Val-30. The Cytoplasmic segment spans residues Asn-31–Arg-46. The helical transmembrane segment at Ile-47–Ser-67 threads the bilayer. Over Ser-68 to Ser-69 the chain is Extracellular. The helical transmembrane segment at Val-70 to Thr-90 threads the bilayer. At Asn-91 to Asn-99 the chain is on the cytoplasmic side. Residues Ile-100 to Leu-120 traverse the membrane as a helical segment. Residues Lys-121–Pro-127 lie on the Extracellular side of the membrane. The chain crosses the membrane as a helical span at residues Tyr-128–Cys-148. Residues Glu-149–Thr-176 are Cytoplasmic-facing. The chain crosses the membrane as a helical span at residues Phe-177–Cys-197. At Ser-198–Lys-223 the chain is on the extracellular side. A helical transmembrane segment spans residues Val-224–Ile-244. Over Ser-245 to Pro-305 the chain is Cytoplasmic.

Belongs to the G-protein coupled receptor T2R family.

The protein resides in the membrane. In terms of biological role, putative taste receptor which may play a role in the perception of bitterness. The chain is Taste receptor type 2 member 136 (Tas2r136) from Mus musculus (Mouse).